The chain runs to 478 residues: Dihydrolipoyl dehydrogenase (478 aa).

FAD is bound by residues 34–49 (EKYI…GGTC), Lys-58, and Gly-122. Residues Cys-49 and Cys-54 are joined by a disulfide bond. NAD(+) is bound by residues 188–192 (GAGVI), Glu-211, Val-245, and 276–279 (AVGR). Residues Asp-319 and Ala-327 each coordinate FAD. His-451 acts as the Proton acceptor in catalysis.

Belongs to the class-I pyridine nucleotide-disulfide oxidoreductase family. In terms of assembly, homodimer. Requires FAD as cofactor.

The protein localises to the cytoplasm. The catalysed reaction is N(6)-[(R)-dihydrolipoyl]-L-lysyl-[protein] + NAD(+) = N(6)-[(R)-lipoyl]-L-lysyl-[protein] + NADH + H(+). In terms of biological role, the branched-chain alpha-keto dehydrogenase complex catalyzes the overall conversion of alpha-keto acids to acyl-CoA and CO(2). It contains multiple copies of 3 enzymatic components: branched-chain alpha-keto acid decarboxylase (E1), lipoamide acyltransferase (E2) and lipoamide dehydrogenase (E3). This Pseudomonas fluorescens protein is Dihydrolipoyl dehydrogenase (lpd).